The chain runs to 123 residues: Small ribosomal subunit protein uS12 (123 aa).

Asp89 is modified (3-methylthioaspartic acid). A disordered region spans residues 104–123; the sequence is TAGVKDRKQARSKYGAKRPK. Basic residues predominate over residues 113–123; that stretch reads ARSKYGAKRPK.

It belongs to the universal ribosomal protein uS12 family. As to quaternary structure, part of the 30S ribosomal subunit. Contacts proteins S8 and S17. May interact with IF1 in the 30S initiation complex.

Functionally, with S4 and S5 plays an important role in translational accuracy. Its function is as follows. Interacts with and stabilizes bases of the 16S rRNA that are involved in tRNA selection in the A site and with the mRNA backbone. Located at the interface of the 30S and 50S subunits, it traverses the body of the 30S subunit contacting proteins on the other side and probably holding the rRNA structure together. The combined cluster of proteins S8, S12 and S17 appears to hold together the shoulder and platform of the 30S subunit. This Neisseria gonorrhoeae (strain ATCC 700825 / FA 1090) protein is Small ribosomal subunit protein uS12.